A 485-amino-acid chain; its full sequence is ATP synthase subunit beta 2 (485 aa).

A compositionally biased stretch (basic and acidic residues) spans 1 to 10 (MSGMGEKSEQ). The tract at residues 1 to 27 (MSGMGEKSEQISKSARSTDPQEQESVA) is disordered. A compositionally biased stretch (polar residues) spans 11–24 (ISKSARSTDPQEQE). 177-184 (GGAGVGKT) serves as a coordination point for ATP.

It belongs to the ATPase alpha/beta chains family. F-type ATPases have 2 components, CF(1) - the catalytic core - and CF(0) - the membrane proton channel. CF(1) has five subunits: alpha(3), beta(3), gamma(1), delta(1), epsilon(1). CF(0) has three main subunits: a(1), b(2) and c(9-12). The alpha and beta chains form an alternating ring which encloses part of the gamma chain. CF(1) is attached to CF(0) by a central stalk formed by the gamma and epsilon chains, while a peripheral stalk is formed by the delta and b chains.

Its subcellular location is the cell inner membrane. The enzyme catalyses ATP + H2O + 4 H(+)(in) = ADP + phosphate + 5 H(+)(out). Its function is as follows. Produces ATP from ADP in the presence of a proton gradient across the membrane. The catalytic sites are hosted primarily by the beta subunits. In Nitrosomonas eutropha (strain DSM 101675 / C91 / Nm57), this protein is ATP synthase subunit beta 2.